Here is a 348-residue protein sequence, read N- to C-terminus: Ferredoxin--NADP reductase (348 aa).

FAD-binding residues include Thr-26, Glu-45, Gln-53, Tyr-58, Ala-98, Phe-133, Asp-299, and Ser-340.

Belongs to the ferredoxin--NADP reductase type 2 family. Homodimer. It depends on FAD as a cofactor.

The enzyme catalyses 2 reduced [2Fe-2S]-[ferredoxin] + NADP(+) + H(+) = 2 oxidized [2Fe-2S]-[ferredoxin] + NADPH. The sequence is that of Ferredoxin--NADP reductase from Prosthecochloris aestuarii (strain DSM 271 / SK 413).